The primary structure comprises 405 residues: Imidazolonepropionase (405 aa).

Histidine 73 and histidine 75 together coordinate Fe(3+). Zn(2+)-binding residues include histidine 73 and histidine 75. Residues arginine 82, tyrosine 145, and histidine 178 each coordinate 4-imidazolone-5-propanoate. Tyrosine 145 lines the N-formimidoyl-L-glutamate pocket. Histidine 243 serves as a coordination point for Fe(3+). Histidine 243 is a binding site for Zn(2+). Position 246 (glutamine 246) interacts with 4-imidazolone-5-propanoate. Aspartate 318 is a binding site for Fe(3+). Aspartate 318 contributes to the Zn(2+) binding site. N-formimidoyl-L-glutamate-binding residues include asparagine 320 and glycine 322. Threonine 323 is a 4-imidazolone-5-propanoate binding site.

Belongs to the metallo-dependent hydrolases superfamily. HutI family. The cofactor is Zn(2+). Fe(3+) is required as a cofactor.

The protein resides in the cytoplasm. The catalysed reaction is 4-imidazolone-5-propanoate + H2O = N-formimidoyl-L-glutamate. It functions in the pathway amino-acid degradation; L-histidine degradation into L-glutamate; N-formimidoyl-L-glutamate from L-histidine: step 3/3. Functionally, catalyzes the hydrolytic cleavage of the carbon-nitrogen bond in imidazolone-5-propanoate to yield N-formimidoyl-L-glutamate. It is the third step in the universal histidine degradation pathway. The chain is Imidazolonepropionase from Brucella anthropi (strain ATCC 49188 / DSM 6882 / CCUG 24695 / JCM 21032 / LMG 3331 / NBRC 15819 / NCTC 12168 / Alc 37) (Ochrobactrum anthropi).